We begin with the raw amino-acid sequence, 393 residues long: Double-stranded RNA-binding protein 5 (393 aa).

DRBM domains lie at 1–70 and 87–155; these read MYKN…VLSS and IYKN…SLKK. 2 disordered regions span residues 220–251 and 335–371; these read ASSS…KSSK and NPNL…QEKK. The segment covering 347–361 has biased composition (polar residues); it reads VNEFTSSNNSCSVLN.

Heterodimer with DRB1, DRB2 or DRB4. Interacts with DCL1 and DCL3. As to expression, expressed in the shoot apical meristem (SAM).

Binds double-stranded RNA. May be involved in RNA-mediated silencing. The chain is Double-stranded RNA-binding protein 5 (DRB5) from Arabidopsis thaliana (Mouse-ear cress).